We begin with the raw amino-acid sequence, 114 residues long: Flagellar hook-basal body complex protein FliE (114 aa).

Belongs to the FliE family.

It is found in the bacterial flagellum basal body. The polypeptide is Flagellar hook-basal body complex protein FliE (Desulfitobacterium hafniense (strain Y51)).